Here is a 757-residue protein sequence, read N- to C-terminus: Subtilisin-like protease SBT1.7 (757 aa).

The signal sequence occupies residues 1–24 (MSSSFLSSTAFFLLLCLGFCHVSS). Residues 25–106 (SSSDQGTYIV…VLPEHRYELH (82 aa)) constitute a propeptide that is removed on maturation. In terms of domain architecture, Inhibitor I9 spans 31–106 (TYIVHMAKSQ…VLPEHRYELH (76 aa)). In terms of domain architecture, Peptidase S8 spans 102-610 (RYELHTTRTP…AGHVSPTTAT (509 aa)). The active-site Charge relay system is the Asp-139. Asn-170 carries an N-linked (GlcNAc...) asparagine glycan. Residues 196 to 219 (PIDESKESRSPRDDDGHGTHTSST) form a disordered region. A compositionally biased stretch (basic and acidic residues) spans 198 to 213 (DESKESRSPRDDDGHG). His-212 (charge relay system) is an active-site residue. Asn-352, Asn-376, and Asn-379 each carry an N-linked (GlcNAc...) asparagine glycan. Ser-542 (charge relay system) is an active-site residue. Asn-631 and Asn-644 each carry an N-linked (GlcNAc...) asparagine glycan.

It belongs to the peptidase S8 family. In terms of tissue distribution, expressed in immature siliques and at lower levels in stems and flowers. Widely expressed at low levels.

It is found in the secreted. The protein localises to the cell wall. Activated by calcium. Inhibited by the serine protease inhibitors 4-(2-aminoethyl)benzenesulphonyl fluoride (AEBSF), PMSF, di-isopropyl phosphofluoridate (DFP) and soybean trypsin inhibitor (SBTI). Not inhibited by benzamidine or iodoacetamide. Leupeptin and pepstatin A have a minor inhibitory action. In terms of biological role, serine protease. Has a substrate preference for the hydrophobic residues Phe and Ala and the basic residue Asp in the P1 position, and for Asp, Leu or Ala in the P1' position. Essential for mucilage release from seed coats. Triggers the accumulation and/or activation of cell wall modifying enzymes necessary either for the loosening of the outer primary cell wall, or to facilitate swelling of the mucilage. This Arabidopsis thaliana (Mouse-ear cress) protein is Subtilisin-like protease SBT1.7.